Reading from the N-terminus, the 170-residue chain is Lipoprotein signal peptidase (170 aa).

3 helical membrane-spanning segments follow: residues 12 to 32 (WYWV…WVLS), 67 to 87 (WQRW…SVWL), and 94 to 113 (MWRL…GNLI). Catalysis depends on residues aspartate 123 and aspartate 141. The helical transmembrane segment at 139 to 159 (IADSAICVGAGLIILDSFVAG) threads the bilayer.

Belongs to the peptidase A8 family.

It is found in the cell inner membrane. It carries out the reaction Release of signal peptides from bacterial membrane prolipoproteins. Hydrolyzes -Xaa-Yaa-Zaa-|-(S,diacylglyceryl)Cys-, in which Xaa is hydrophobic (preferably Leu), and Yaa (Ala or Ser) and Zaa (Gly or Ala) have small, neutral side chains.. It functions in the pathway protein modification; lipoprotein biosynthesis (signal peptide cleavage). In terms of biological role, this protein specifically catalyzes the removal of signal peptides from prolipoproteins. This chain is Lipoprotein signal peptidase, found in Shewanella pealeana (strain ATCC 700345 / ANG-SQ1).